A 161-amino-acid chain; its full sequence is Ferredoxin/F(420)H(2)-dependent CoB-CoM heterodisulfide reductase subunit C (161 aa).

2 4Fe-4S ferredoxin-type domains span residues 10-40 (KAEG…LNTR) and 51-82 (AAVL…TDAI). [4Fe-4S] cluster contacts are provided by Cys19, Cys22, Cys25, Cys29, Cys62, Cys65, Cys68, and Cys72.

It belongs to the HdrC family. As to quaternary structure, the ferredoxin/F(420)H(2)-dependent CoB-CoM heterodisulfide reductase is composed of three subunits; HdrA2, HdrB2 and HdrC2. The cofactor is [4Fe-4S] cluster.

The protein resides in the cytoplasm. The enzyme catalyses coenzyme B + coenzyme M + 2 oxidized [2Fe-2S]-[ferredoxin] = coenzyme M-coenzyme B heterodisulfide + 2 reduced [2Fe-2S]-[ferredoxin] + 2 H(+). The catalysed reaction is coenzyme B + 2 oxidized coenzyme F420-(gamma-L-Glu)(n) + coenzyme M + 2 reduced [2Fe-2S]-[ferredoxin] + 4 H(+) = coenzyme M-coenzyme B heterodisulfide + 2 reduced coenzyme F420-(gamma-L-Glu)(n) + 2 oxidized [2Fe-2S]-[ferredoxin]. Its pathway is cofactor metabolism; coenzyme M-coenzyme B heterodisulfide reduction; coenzyme B and coenzyme M from coenzyme M-coenzyme B heterodisulfide: step 1/1. In terms of biological role, part of a complex that catalyzes the reversible reduction of CoM-S-S-CoB to the thiol-coenzymes H-S-CoM (coenzyme M) and H-S-CoB (coenzyme B). Catalyzes the transfer of electrons from ferredoxin to CoM-S-S-CoB during methanogenesis from acetate. Electrons transfer from ferredoxin to CoM-S-S-CoB via HdrA2, HdrC2 and HdrB2. In addition, the complex can use electron bifurcation to direct electron pairs from reduced coenzyme F420 towards the reduction of both ferredoxin and CoB-CoM heterodisulfide. This activity may take place during Fe(III)-dependent anaerobic methane oxidation. The protein is Ferredoxin/F(420)H(2)-dependent CoB-CoM heterodisulfide reductase subunit C of Methanosarcina acetivorans (strain ATCC 35395 / DSM 2834 / JCM 12185 / C2A).